Consider the following 254-residue polypeptide: Dolichol-phosphate mannosyltransferase subunit 1 (254 aa).

The GDP-alpha-D-mannose site is built by Pro25, Tyr27, Glu29, Val56, Asp58, Asp111, Ala112, Asp113, Arg140, and Arg227. Mg(2+) is bound at residue Asp113. Asp113 lines the Mn(2+) pocket.

The protein belongs to the glycosyltransferase 2 family. As to quaternary structure, component of the dolichol-phosphate mannose (DPM) synthase complex composed of dpm1, dpm2 and dpm3. Mg(2+) serves as cofactor. Mn(2+) is required as a cofactor. The cofactor is Ca(2+).

Its subcellular location is the endoplasmic reticulum. The catalysed reaction is a di-trans,poly-cis-dolichyl phosphate + GDP-alpha-D-mannose = a di-trans,poly-cis-dolichyl beta-D-mannosyl phosphate + GDP. Its pathway is protein modification; protein glycosylation. In terms of biological role, transfers mannose from GDP-mannose to dolichol monophosphate to form dolichol phosphate mannose (Dol-P-Man) which is the mannosyl donor in pathways leading to N-glycosylation, glycosyl phosphatidylinositol membrane anchoring, and O-mannosylation of proteins; catalytic subunit of the dolichol-phosphate mannose (DPM) synthase complex. The polypeptide is Dolichol-phosphate mannosyltransferase subunit 1 (dpm1) (Dictyostelium discoideum (Social amoeba)).